A 356-amino-acid polypeptide reads, in one-letter code: UDP-N-acetylglucosamine--N-acetylmuramyl-(pentapeptide) pyrophosphoryl-undecaprenol N-acetylglucosamine transferase (356 aa).

UDP-N-acetyl-alpha-D-glucosamine-binding positions include 15-17 (TGG), Asn127, Arg163, Ser191, Ile244, 263-268 (ALTVSE), and Gln288.

Belongs to the glycosyltransferase 28 family. MurG subfamily.

The protein resides in the cell inner membrane. The catalysed reaction is di-trans,octa-cis-undecaprenyl diphospho-N-acetyl-alpha-D-muramoyl-L-alanyl-D-glutamyl-meso-2,6-diaminopimeloyl-D-alanyl-D-alanine + UDP-N-acetyl-alpha-D-glucosamine = di-trans,octa-cis-undecaprenyl diphospho-[N-acetyl-alpha-D-glucosaminyl-(1-&gt;4)]-N-acetyl-alpha-D-muramoyl-L-alanyl-D-glutamyl-meso-2,6-diaminopimeloyl-D-alanyl-D-alanine + UDP + H(+). The protein operates within cell wall biogenesis; peptidoglycan biosynthesis. Functionally, cell wall formation. Catalyzes the transfer of a GlcNAc subunit on undecaprenyl-pyrophosphoryl-MurNAc-pentapeptide (lipid intermediate I) to form undecaprenyl-pyrophosphoryl-MurNAc-(pentapeptide)GlcNAc (lipid intermediate II). The sequence is that of UDP-N-acetylglucosamine--N-acetylmuramyl-(pentapeptide) pyrophosphoryl-undecaprenol N-acetylglucosamine transferase from Klebsiella pneumoniae (strain 342).